The chain runs to 35 residues: Pheromone-binding protein 1 (35 aa).

It belongs to the PBP/GOBP family. In terms of assembly, homodimer. In terms of tissue distribution, antenna.

This major soluble protein in olfactory sensilla of male moths might serve to solubilize the extremely hydrophobic pheromone molecules and to transport pheromone through the aqueous lymph to receptors located on olfactory cilia. The chain is Pheromone-binding protein 1 from Lymantria dispar (Gypsy moth).